The sequence spans 168 residues: PTS system glucose-specific EIIA component (168 aa).

The 105-residue stretch at 38–142 (DEVFSNKIVG…STLTPVIISN (105 aa)) folds into the PTS EIIA type-1 domain. Positions 75 and 90 each coordinate Zn(2+). Histidine 90 acts as the Tele-phosphohistidine intermediate; for EIIA activity in catalysis. At histidine 90 the chain carries Phosphohistidine; by HPr.

Zn(2+) is required as a cofactor.

It is found in the cytoplasm. Its function is as follows. The phosphoenolpyruvate-dependent sugar phosphotransferase system (sugar PTS), a major carbohydrate active transport system, catalyzes the phosphorylation of incoming sugar substrates concomitantly with their translocation across the cell membrane. The enzyme II complex composed of PtsG and Crr is involved in glucose transport. The protein is PTS system glucose-specific EIIA component (crr) of Buchnera aphidicola subsp. Baizongia pistaciae (strain Bp).